An 824-amino-acid chain; its full sequence is Translation initiation factor IF-2 (824 aa).

Disordered regions lie at residues 1–32 (MSDTDGKKTLGLRGGAPRPGNVKQSFSHGRTK) and 45–232 (VPKA…MGGQ). The segment covering 45-57 (VPKAGATTSAGGK) has biased composition (low complexity). Over residues 86–144 (KAREAEEEAARIAEEKARAEERERRRAEQEERERAEREREESLKAKAEEDKRRKDEAEA) the composition is skewed to basic and acidic residues. Low complexity predominate over residues 145-167 (AAKAAAAPAAEPVVQRPAAKAAP). Basic and acidic residues predominate over residues 170 to 193 (APRKQQDRDRDNKRGGKGNDDSRR). The 169-residue stretch at 321 to 489 (TRPPVVTIMG…AIALQAEILE (169 aa)) folds into the tr-type G domain. The tract at residues 330–337 (GHVDHGKT) is G1. Position 330 to 337 (330 to 337 (GHVDHGKT)) interacts with GTP. Residues 355–359 (GITQH) form a G2 region. Residues 377-380 (DTPG) form a G3 region. GTP-binding positions include 377–381 (DTPGH) and 431–434 (NKID). The tract at residues 431-434 (NKID) is G4. The interval 467 to 469 (SAI) is G5.

Belongs to the TRAFAC class translation factor GTPase superfamily. Classic translation factor GTPase family. IF-2 subfamily.

It is found in the cytoplasm. Functionally, one of the essential components for the initiation of protein synthesis. Protects formylmethionyl-tRNA from spontaneous hydrolysis and promotes its binding to the 30S ribosomal subunits. Also involved in the hydrolysis of GTP during the formation of the 70S ribosomal complex. The chain is Translation initiation factor IF-2 from Roseobacter denitrificans (strain ATCC 33942 / OCh 114) (Erythrobacter sp. (strain OCh 114)).